The sequence spans 151 residues: Ubiquitin-like protein 4A-B (151 aa).

Positions 1-76 constitute a Ubiquitin-like domain; the sequence is MILTIKPLKG…LNLVVRPAGE (76 aa).

In terms of assembly, component of the BAT3 complex.

It is found in the cytoplasm. It localises to the cytosol. Its function is as follows. Component of the BAT3 complex, a multiprotein complex involved in the post-translational delivery of tail-anchored (TA) membrane proteins to the endoplasmic reticulum membrane. TA membrane proteins, also named type II transmembrane proteins, contain a single C-terminal transmembrane region. This is Ubiquitin-like protein 4A-B (ubl4ab) from Oncorhynchus mykiss (Rainbow trout).